Here is a 224-residue protein sequence, read N- to C-terminus: Mannose-specific lectin 3 (224 aa).

Bulb-type lectin domains lie at Asn-2 to Ala-111 and Arg-117 to Thr-222. 2 cysteine pairs are disulfide-bonded: Cys-30–Cys-52 and Cys-145–Cys-170.

As to quaternary structure, heterotetramer of 2 domain 1 and 2 domain 2 chains arranged as a dimer of domain 1/domain 2 heterodimers.

Its function is as follows. Mannose-specific lectin. Has weak agglutinating activity towards trypsin-treated erythrocytes from rabbit but not from human. In Crocus vernus (Dutch crocus), this protein is Mannose-specific lectin 3.